Consider the following 547-residue polypeptide: Elongator complex protein 3 (547 aa).

The region spanning 82 to 372 (RTASGIAVVA…YRVQRDIPMP (291 aa)) is the Radical SAM core domain. [4Fe-4S] cluster contacts are provided by C99, C109, and C112. Phosphoserine is present on S161. Residue K164 coordinates acetyl-CoA. The residue at position 229 (K229) is an N6-methyllysine. A Phosphotyrosine modification is found at Y251. The N-acetyltransferase domain maps to 396–547 (IQCRDVRTRE…QGPYMVKMLK (152 aa)). Acetyl-CoA-binding positions include 474-477 (ELHV), 497-499 (FGM), and Y530.

The protein belongs to the ELP3 family. As to quaternary structure, component of the elongator complex which consists of ELP1, ELP2, ELP3, ELP4, ELP5 and ELP6. ELP1, ELP2 and ELP3 form the elongator core complex. Interacts with alpha-tubulin. It depends on [4Fe-4S] cluster as a cofactor. In terms of processing, tyrosine-phosphorylated. Also serine/threonine-phosphorylated.

Its subcellular location is the cytoplasm. It localises to the nucleus. It catalyses the reaction uridine(34) in tRNA + acetyl-CoA + S-adenosyl-L-methionine + H2O = 5-(carboxymethyl)uridine(34) in tRNA + 5'-deoxyadenosine + L-methionine + CoA + 2 H(+). Its pathway is tRNA modification; 5-methoxycarbonylmethyl-2-thiouridine-tRNA biosynthesis. Catalytic tRNA acetyltransferase subunit of the elongator complex which is required for multiple tRNA modifications, including mcm5U (5-methoxycarbonylmethyl uridine), mcm5s2U (5-methoxycarbonylmethyl-2-thiouridine), and ncm5U (5-carbamoylmethyl uridine). In the elongator complex, acts as a tRNA uridine(34) acetyltransferase by mediating formation of carboxymethyluridine in the wobble base at position 34 in tRNAs. May also act as a protein lysine acetyltransferase by mediating acetylation of target proteins; such activity is however unclear in vivo and recent evidences suggest that ELP3 primarily acts as a tRNA acetyltransferase. Involved in neurogenesis: regulates the migration and branching of projection neurons in the developing cerebral cortex, through a process depending on alpha-tubulin acetylation. Required for acetylation of GJA1 in the developing cerebral cortex. The chain is Elongator complex protein 3 from Mus musculus (Mouse).